The primary structure comprises 580 residues: Arginine--tRNA ligase (580 aa).

Residues 123–133 carry the 'HIGH' region motif; sequence PNLAKEMHVGH.

Belongs to the class-I aminoacyl-tRNA synthetase family. As to quaternary structure, monomer.

The protein resides in the cytoplasm. The catalysed reaction is tRNA(Arg) + L-arginine + ATP = L-arginyl-tRNA(Arg) + AMP + diphosphate. This Pseudoalteromonas translucida (strain TAC 125) protein is Arginine--tRNA ligase.